The primary structure comprises 554 residues: Inactive serine/threonine-protein kinase/endoribonuclease IRE1-like (554 aa).

The signal sequence occupies residues 1-17 (MWLLAISLVGLLVVVVC). The disordered stretch occupies residues 36 to 85 (KRDKNSAPRVSASGEDGTKNEQVEKKSDPSGGLGEENEKTNSESKVLSVP). Positions 51–63 (DGTKNEQVEKKSD) are enriched in basic and acidic residues. The Protein kinase domain maps to 121–408 (LVSTNEMKYG…ATQVLLHPLF (288 aa)). K150 contacts ATP. One can recognise a KEN domain in the interval 411–554 (SEKRLFFLRE…GEEAFEKYFN (144 aa)).

It belongs to the protein kinase superfamily. Ser/Thr protein kinase family.

The protein is Inactive serine/threonine-protein kinase/endoribonuclease IRE1-like of Arabidopsis thaliana (Mouse-ear cress).